Reading from the N-terminus, the 205-residue chain is Cytochrome c oxidase subunit 3 (205 aa).

Transmembrane regions (helical) follow at residues 29–49 (TIVFLSQELMFFAGLFAMYFV), 72–92 (ALLITVILVSSSVTCQFGVFA), 104–124 (WFLVTIILGSIFVIGQGYEYI), 142–162 (FFITTGFHALHVIAGVMAFVV), and 184–204 (SYYWHFVDVVWIGLFITIYFI).

As to quaternary structure, associates with subunits I, II and IV to form cytochrome c oxidase. The 4 subunit cytochrome c oxidase forms a supercomplex with the menaquinol-cytochrome c reductase complex (cytochrome bc1).

The protein resides in the cell membrane. The enzyme catalyses 4 Fe(II)-[cytochrome c] + O2 + 8 H(+)(in) = 4 Fe(III)-[cytochrome c] + 2 H2O + 4 H(+)(out). The sequence is that of Cytochrome c oxidase subunit 3 (ctaE) from Corynebacterium glutamicum (strain ATCC 13032 / DSM 20300 / JCM 1318 / BCRC 11384 / CCUG 27702 / LMG 3730 / NBRC 12168 / NCIMB 10025 / NRRL B-2784 / 534).